We begin with the raw amino-acid sequence, 519 residues long: MTCPDKPGQLINWFICSLCVPRVRKLWSSRRPRTRRNLLLGTACAIYLGFLVSQVGRASLQHGQAAEKGPHRSRDTAEPSFPEIPLDGTLAPPESQGNGSTLQPNVVYITLRSKRSKPANIRGTVKPKRRKKHAVASAAPGQEALVGPSLQPQEAAREADAVAPGYAQGANLVKIGERPWRLVRGPGVRAGGPDFLQPSSRESNIRIYSESAPSWLSKDDIRRMRLLADSAVAGLRPVSSRSGARLLVLEGGAPGAVLRCGPSPCGLLKQPLDMSEVFAFHLDRILGLNRTLPSVSRKAEFIQDGRPCPIILWDASLSSASNDTHSSVKLTWGTYQQLLKQKCWQNGRVPKPESGCTEIHHHEWSKMALFDFLLQIYNRLDTNCCGFRPRKEDACVQNGLRPKCDDQGSAALAHIIQRKHDPRHLVFIDNKGFFDRSEDNLNFKLLEGIKEFPASAVSVLKSQHLRQKLLQSLFLDKVYWESQGGRQGIEKLIDVIEHRAKILITYINAHGVKVLPMNE.

Residues 1–37 are Cytoplasmic-facing; the sequence is MTCPDKPGQLINWFICSLCVPRVRKLWSSRRPRTRRN. The helical; Signal-anchor for type II membrane protein transmembrane segment at 38 to 55 threads the bilayer; sequence LLLGTACAIYLGFLVSQV. Residues 56–519 lie on the Extracellular side of the membrane; sequence GRASLQHGQA…HGVKVLPMNE (464 aa). Positions 62-103 are disordered; it reads HGQAAEKGPHRSRDTAEPSFPEIPLDGTLAPPESQGNGSTLQ. A compositionally biased stretch (basic and acidic residues) spans 68-77; the sequence is KGPHRSRDTA. Asn289 carries N-linked (GlcNAc...) asparagine glycosylation.

Belongs to the GASK family.

The protein localises to the golgi apparatus membrane. The chain is Golgi-associated kinase 1B from Homo sapiens (Human).